Consider the following 279-residue polypeptide: Large ribosomal subunit protein uL2 (279 aa).

The interval 223–279 (MAMNPVDHPMGGGEGKSKSGGGRKHPKSPWGQLAKGLKTRNKKKASTKLIVRGRKAK) is disordered. Over residues 232–242 (MGGGEGKSKSG) the composition is skewed to gly residues. Positions 259–279 (LKTRNKKKASTKLIVRGRKAK) are enriched in basic residues.

It belongs to the universal ribosomal protein uL2 family. In terms of assembly, part of the 50S ribosomal subunit. Forms a bridge to the 30S subunit in the 70S ribosome.

In terms of biological role, one of the primary rRNA binding proteins. Required for association of the 30S and 50S subunits to form the 70S ribosome, for tRNA binding and peptide bond formation. It has been suggested to have peptidyltransferase activity; this is somewhat controversial. Makes several contacts with the 16S rRNA in the 70S ribosome. This Chlorobaculum tepidum (strain ATCC 49652 / DSM 12025 / NBRC 103806 / TLS) (Chlorobium tepidum) protein is Large ribosomal subunit protein uL2.